The following is a 388-amino-acid chain: Beta-lactamase (388 aa).

Positions 1-24 (MMKKSIINTLIFTSIATFPLYTLA) are cleaved as a signal peptide. Serine 89 (acyl-ester intermediate) is an active-site residue. Tyrosine 175 (proton acceptor) is an active-site residue. Residue 342 to 344 (KTG) coordinates substrate.

Belongs to the class-C beta-lactamase family.

The protein localises to the periplasm. It catalyses the reaction a beta-lactam + H2O = a substituted beta-amino acid. In terms of biological role, this protein is a serine beta-lactamase with a substrate specificity for cephalosporins. The polypeptide is Beta-lactamase (ampC) (Yersinia enterocolitica).